We begin with the raw amino-acid sequence, 85 residues long: Glutaredoxin 1 (85 aa).

Positions 1-85 constitute a Glutaredoxin domain; the sequence is MQTVIFGRSG…AAWVKENLDA (85 aa). Cys-11 and Cys-14 are joined by a disulfide.

The protein belongs to the glutaredoxin family. As to quaternary structure, monomer.

Its function is as follows. The disulfide bond functions as an electron carrier in the glutathione-dependent synthesis of deoxyribonucleotides by the enzyme ribonucleotide reductase. In addition, it is also involved in reducing some disulfides in a coupled system with glutathione reductase. The chain is Glutaredoxin 1 (grxA) from Shigella flexneri.